A 421-amino-acid chain; its full sequence is Imidazolonepropionase (421 aa).

Residues His-81 and His-83 each coordinate Fe(3+). The Zn(2+) site is built by His-81 and His-83. Residues Arg-90, Tyr-153, and His-186 each coordinate 4-imidazolone-5-propanoate. Tyr-153 is a binding site for N-formimidoyl-L-glutamate. His-251 lines the Fe(3+) pocket. His-251 contributes to the Zn(2+) binding site. A 4-imidazolone-5-propanoate-binding site is contributed by Glu-254. Asp-326 is a binding site for Fe(3+). Asp-326 lines the Zn(2+) pocket. Residues Asn-328 and Gly-330 each contribute to the N-formimidoyl-L-glutamate site. Ser-331 contributes to the 4-imidazolone-5-propanoate binding site.

It belongs to the metallo-dependent hydrolases superfamily. HutI family. Zn(2+) is required as a cofactor. Fe(3+) serves as cofactor.

The protein localises to the cytoplasm. The catalysed reaction is 4-imidazolone-5-propanoate + H2O = N-formimidoyl-L-glutamate. Its pathway is amino-acid degradation; L-histidine degradation into L-glutamate; N-formimidoyl-L-glutamate from L-histidine: step 3/3. Functionally, catalyzes the hydrolytic cleavage of the carbon-nitrogen bond in imidazolone-5-propanoate to yield N-formimidoyl-L-glutamate. It is the third step in the universal histidine degradation pathway. This Streptococcus gordonii (strain Challis / ATCC 35105 / BCRC 15272 / CH1 / DL1 / V288) protein is Imidazolonepropionase.